The primary structure comprises 132 residues: Large ribosomal subunit protein uL14 (132 aa).

It belongs to the universal ribosomal protein uL14 family. The L3/L14/L24e cluster may contact the 16S rRNA in 2 intersubunit bridges. Part of the 50S ribosomal subunit. Forms a cluster with proteins L3 and L24e.

Forms part of two intersubunit bridges in the 70S ribosome. Binds to 23S rRNA. The chain is Large ribosomal subunit protein uL14 from Haloarcula marismortui (strain ATCC 43049 / DSM 3752 / JCM 8966 / VKM B-1809) (Halobacterium marismortui).